The chain runs to 984 residues: MQEHLVVTLDGKDYLVEPGTNLLEFIKSQDTFVPSICYNESMGPIQTCDTCTVEIDGKIERSCSTVIDRPMTVNTVNNDVKDAQKEALDRILEKHMLYCTVCDYNNGDCEIHNTMDAWGLQHQTYEYKEKPYEKDYGPFYRYDPNQCILCGRCVEACQDIEVNETIRIDWDREHPRVIWDNDVPINESSCVSCGQCATVCPCNAMMEVNMEGNAGYMTDTEPGSLAAMIDLTKKAEPGYGPLFAISDSEAEMRKERIKKTKTVCTYCGVGCSFEVWTKDREILKVQPSHDSPANKIATCVKGKFSWGHINSDQRLTKPLVRKNGEFHEVEWDEALNVIADNFTAIKEKHGPDALSFISSSKATNEESYLMQKLARQVIGTNNVDNCSRYCQAPATKGLFRTVGHGGDSGSIEDLEKAAMSVLIGTNTAEAHPVIASRMKRAQKLFGQKIHVFDIRKHEMAERADRFYQPKPGTDLAWLSAVTKYIIDHDLHDKAFIDEWVDDFDEYYKSLETFTMAFAEEATGIPESELIKFAEECAKAESVVICWAMGITQQDIGSDSSTAISNLLLVTGNYRRPGTGAYPLRGHNNVQGCSDMGSMPDKITGYQSIEADDIRAKFEKEYGVKLNPKAGKDNHEMVEGIHDGEVHSLYLYGEDTGIVDSNINFVQAAFEKLDFMVVQDEFLTFTATYADVVLPASPSLEKDGTFTNTERRIQRLYQALEPLGDSKPDWKIFQAIANRLGFDWNYKHPSEIMDEVARLTPLYAGVSYDRLEGFNSLQWPVQPDGTDEPILYLEGFNFDNGKAKLFPLSFDNYFKQDEIYDIHVNNGRLLEHFHEGNMTYQTPMIKYKVPRAFVEISPELAEDRGIHEGAEVKLISETGEAVLQVHVTDRVKGKEIYIPLNNDAMENGDLGAINLLTNSDVDQYTDTPSYKRTSCRLEVITKRGKSPLNPNNFRVNKKRQPQYSVQVQKKWERSDYVFPGNQVDK.

Residues 3-79 (EHLVVTLDGK…PMTVNTVNND (77 aa)) enclose the 2Fe-2S ferredoxin-type domain. 4 residues coordinate [2Fe-2S] cluster: Cys37, Cys48, Cys51, and Cys63. One can recognise a 4Fe-4S His(Cys)3-ligated-type domain in the interval 79-119 (DVKDAQKEALDRILEKHMLYCTVCDYNNGDCEIHNTMDAWG). The [4Fe-4S] cluster site is built by His95, Cys99, Cys102, Cys109, Cys147, Cys150, Cys153, Cys157, Cys190, Cys193, Cys196, Cys200, Cys264, Cys267, Cys271, and Cys299. 4Fe-4S ferredoxin-type domains are found at residues 138–165 (PFYR…VNET) and 181–211 (NDVP…VNME). A formate dehydrogenase region spans residues 252 to 984 (MRKERIKKTK…YVFPGNQVDK (733 aa)). Residues 257 to 313 (IKKTKTVCTYCGVGCSFEVWTKDREILKVQPSHDSPANKIATCVKGKFSWGHINSDQ) enclose the 4Fe-4S Mo/W bis-MGD-type domain.

This sequence in the C-terminal section; belongs to the prokaryotic molybdopterin-containing oxidoreductase family. [2Fe-2S] cluster is required as a cofactor. [4Fe-4S] cluster serves as cofactor. Requires Mo-bis(molybdopterin guanine dinucleotide) as cofactor.

It catalyses the reaction formate + NAD(+) = CO2 + NADH. The polypeptide is Putative formate dehydrogenase SAUSA300_2258 (Staphylococcus aureus (strain USA300)).